The chain runs to 90 residues: Cluster 41 protein AFLA_114800 (90 aa).

A helical transmembrane segment spans residues Gly-55 to Val-77. A glycan (N-linked (GlcNAc...) asparagine) is linked at Asn-80.

Its subcellular location is the membrane. Cluster 41 protein; part of the gene cluster 41 that mediates the biosynthesis of an extracellular and diffusible metabolite that is able to stimulate colony sclerotial production. The polypeptide is Cluster 41 protein AFLA_114800 (Aspergillus flavus (strain ATCC 200026 / FGSC A1120 / IAM 13836 / NRRL 3357 / JCM 12722 / SRRC 167)).